The chain runs to 529 residues: Bifunctional purine biosynthesis protein PurH (529 aa).

The region spanning 1-148 (MQQRRPIRRA…KNHKDVAIVV (148 aa)) is the MGS-like domain.

This sequence belongs to the PurH family.

It carries out the reaction (6R)-10-formyltetrahydrofolate + 5-amino-1-(5-phospho-beta-D-ribosyl)imidazole-4-carboxamide = 5-formamido-1-(5-phospho-D-ribosyl)imidazole-4-carboxamide + (6S)-5,6,7,8-tetrahydrofolate. It catalyses the reaction IMP + H2O = 5-formamido-1-(5-phospho-D-ribosyl)imidazole-4-carboxamide. The protein operates within purine metabolism; IMP biosynthesis via de novo pathway; 5-formamido-1-(5-phospho-D-ribosyl)imidazole-4-carboxamide from 5-amino-1-(5-phospho-D-ribosyl)imidazole-4-carboxamide (10-formyl THF route): step 1/1. Its pathway is purine metabolism; IMP biosynthesis via de novo pathway; IMP from 5-formamido-1-(5-phospho-D-ribosyl)imidazole-4-carboxamide: step 1/1. The chain is Bifunctional purine biosynthesis protein PurH from Yersinia enterocolitica serotype O:8 / biotype 1B (strain NCTC 13174 / 8081).